A 507-amino-acid chain; its full sequence is ATP synthase subunit alpha (507 aa).

ATP is bound at residue 168 to 175; that stretch reads GDRKTGKT.

Belongs to the ATPase alpha/beta chains family. In terms of assembly, F-type ATPases have 2 components, CF(1) - the catalytic core - and CF(0) - the membrane proton channel. CF(1) has five subunits: alpha(3), beta(3), gamma(1), delta(1), epsilon(1). CF(0) has three main subunits: a(1), b(2) and c(9-12). The alpha and beta chains form an alternating ring which encloses part of the gamma chain. CF(1) is attached to CF(0) by a central stalk formed by the gamma and epsilon chains, while a peripheral stalk is formed by the delta and b chains.

Its subcellular location is the cell inner membrane. The catalysed reaction is ATP + H2O + 4 H(+)(in) = ADP + phosphate + 5 H(+)(out). In terms of biological role, produces ATP from ADP in the presence of a proton gradient across the membrane. The alpha chain is a regulatory subunit. In Ehrlichia ruminantium (strain Gardel), this protein is ATP synthase subunit alpha.